The chain runs to 183 residues: NADH-quinone oxidoreductase subunit A (183 aa).

A run of 3 helical transmembrane segments spans residues 11–31, 63–83, and 98–118; these read IIAF…VPLL, FYLV…LYAW, and MVIF…TGAL. A disordered region spans residues 160 to 183; it reads GHIPAQSSGRMKSKTSTAPSSKQE. A compositionally biased stretch (polar residues) spans 164–183; it reads AQSSGRMKSKTSTAPSSKQE.

The protein belongs to the complex I subunit 3 family. In terms of assembly, NDH-1 is composed of 14 different subunits. Subunits NuoA, H, J, K, L, M, N constitute the membrane sector of the complex.

The protein localises to the cell inner membrane. The enzyme catalyses a quinone + NADH + 5 H(+)(in) = a quinol + NAD(+) + 4 H(+)(out). NDH-1 shuttles electrons from NADH, via FMN and iron-sulfur (Fe-S) centers, to quinones in the respiratory chain. The immediate electron acceptor for the enzyme in this species is believed to be ubiquinone. Couples the redox reaction to proton translocation (for every two electrons transferred, four hydrogen ions are translocated across the cytoplasmic membrane), and thus conserves the redox energy in a proton gradient. This chain is NADH-quinone oxidoreductase subunit A, found in Acinetobacter baylyi (strain ATCC 33305 / BD413 / ADP1).